The sequence spans 546 residues: MLVNAIRQKVSEVISKAYGSEIEFEVEIPPRKEFGDLSTNVAMKLAKTLKKNPREIAQEIVKSLDEDPSFDRIEIMGPGFINFFLSNELLRGVVKTVLEKKDEYGRENVGNGMKVQFEYGSANPTGPFTVGHGRQIIIGDVLSEVYKELGYDVTREMYINDAGKQIRLLAQSLWARYNQLLGVEKEIPEGGYRGEYLVDIARDLVNEIGDRYKDLWNEEVEEFFKQTALNRILSSMKDTLEKIGSSFDVYFSEKSLIEDGTVEEVLKLLKNKDVVYEKDGAVWLKVSAFIDEEDKVLVRSDGTYTYFMTDIAYHYKKYKRGFRKVYDIWGSDHHGHIPRMKAAMKALDIPDDFFNVILHQFVTLKRGGEIVRMSTRAGEFVTLDELLDEVGRDATRYFFAMVDPNTHMVFDIDLAKAKSMDNPVYYVQYAHARIHNLFSNAEKKGVKFEEGKHLELLGNEEERVLMRNLGMFNTALKEVAQMFAPNRLTNYLQSLAESFHAFYTKHVIVDPENPELSNARLNLALATGIVLRKGLKLIGVSAPERM.

A 'HIGH' region motif is present at residues 122-132 (ANPTGPFTVGH).

It belongs to the class-I aminoacyl-tRNA synthetase family. As to quaternary structure, monomer.

The protein localises to the cytoplasm. The catalysed reaction is tRNA(Arg) + L-arginine + ATP = L-arginyl-tRNA(Arg) + AMP + diphosphate. This Thermotoga maritima (strain ATCC 43589 / DSM 3109 / JCM 10099 / NBRC 100826 / MSB8) protein is Arginine--tRNA ligase (argS).